A 302-amino-acid chain; its full sequence is Glutaminase (302 aa).

Substrate-binding residues include Ser-61, Asn-111, Glu-155, Asn-162, Tyr-186, Tyr-238, and Val-256.

Belongs to the glutaminase family. As to quaternary structure, homotetramer.

It catalyses the reaction L-glutamine + H2O = L-glutamate + NH4(+). This is Glutaminase from Pseudomonas aeruginosa (strain LESB58).